We begin with the raw amino-acid sequence, 205 residues long: Recombination protein RecR (205 aa).

Residues 60–75 form a C4-type zinc finger; it reads CKVCHNISDTETCQIC. The 96-residue stretch at 83-178 folds into the Toprim domain; it reads STVCVVENIR…KLSVIARGIS (96 aa).

The protein belongs to the RecR family.

Its function is as follows. May play a role in DNA repair. It seems to be involved in an RecBC-independent recombinational process of DNA repair. It may act with RecF and RecO. This chain is Recombination protein RecR, found in Bacteroides thetaiotaomicron (strain ATCC 29148 / DSM 2079 / JCM 5827 / CCUG 10774 / NCTC 10582 / VPI-5482 / E50).